The chain runs to 264 residues: Thymidylate synthase (264 aa).

A dUMP-binding site is contributed by R21. Position 51 (H51) interacts with (6R)-5,10-methylene-5,6,7,8-tetrahydrofolate. Residue 126-127 coordinates dUMP; that stretch reads RR. The active-site Nucleophile is C146. DUMP is bound by residues 166 to 169, N177, and 207 to 209; these read RSAD and HLY. A (6R)-5,10-methylene-5,6,7,8-tetrahydrofolate-binding site is contributed by D169. A263 provides a ligand contact to (6R)-5,10-methylene-5,6,7,8-tetrahydrofolate.

This sequence belongs to the thymidylate synthase family. Bacterial-type ThyA subfamily. In terms of assembly, homodimer.

It localises to the cytoplasm. The catalysed reaction is dUMP + (6R)-5,10-methylene-5,6,7,8-tetrahydrofolate = 7,8-dihydrofolate + dTMP. It participates in pyrimidine metabolism; dTTP biosynthesis. Catalyzes the reductive methylation of 2'-deoxyuridine-5'-monophosphate (dUMP) to 2'-deoxythymidine-5'-monophosphate (dTMP) while utilizing 5,10-methylenetetrahydrofolate (mTHF) as the methyl donor and reductant in the reaction, yielding dihydrofolate (DHF) as a by-product. This enzymatic reaction provides an intracellular de novo source of dTMP, an essential precursor for DNA biosynthesis. The sequence is that of Thymidylate synthase from Cupriavidus necator (strain ATCC 17699 / DSM 428 / KCTC 22496 / NCIMB 10442 / H16 / Stanier 337) (Ralstonia eutropha).